We begin with the raw amino-acid sequence, 66 residues long: Large ribosomal subunit protein uL29 (66 aa).

Belongs to the universal ribosomal protein uL29 family.

The polypeptide is Large ribosomal subunit protein uL29 (Caldanaerobacter subterraneus subsp. tengcongensis (strain DSM 15242 / JCM 11007 / NBRC 100824 / MB4) (Thermoanaerobacter tengcongensis)).